We begin with the raw amino-acid sequence, 421 residues long: Gamma-glutamyl phosphate reductase (421 aa).

It belongs to the gamma-glutamyl phosphate reductase family.

It localises to the cytoplasm. The catalysed reaction is L-glutamate 5-semialdehyde + phosphate + NADP(+) = L-glutamyl 5-phosphate + NADPH + H(+). Its pathway is amino-acid biosynthesis; L-proline biosynthesis; L-glutamate 5-semialdehyde from L-glutamate: step 2/2. Functionally, catalyzes the NADPH-dependent reduction of L-glutamate 5-phosphate into L-glutamate 5-semialdehyde and phosphate. The product spontaneously undergoes cyclization to form 1-pyrroline-5-carboxylate. The sequence is that of Gamma-glutamyl phosphate reductase from Shewanella pealeana (strain ATCC 700345 / ANG-SQ1).